The chain runs to 296 residues: Nucleotide-binding protein SPJ_1472 (296 aa).

Residue 13-20 coordinates ATP; sequence GMSGAGKT. GTP is bound at residue 63–66; that stretch reads DMRS.

This sequence belongs to the RapZ-like family.

Displays ATPase and GTPase activities. The sequence is that of Nucleotide-binding protein SPJ_1472 from Streptococcus pneumoniae (strain JJA).